Reading from the N-terminus, the 428-residue chain is Immunoglobulin superfamily containing leucine-rich repeat protein (428 aa).

Positions 1–18 are cleaved as a signal peptide; that stretch reads MRALCLLCWAVLLNLVRA. The region spanning 19 to 50 is the LRRNT domain; the sequence is CPEPCDCGEKYGFQIADCAYRDLEGVPPGFPA. N-linked (GlcNAc...) asparagine glycosylation occurs at asparagine 51. LRR repeat units lie at residues 51–72, 75–98, 99–122, 123–144, and 147–168; these read NVTT…AFRE, LLQS…APLS, HLKS…HNLS, ALQL…AFSS, and ALRS…TFAP. The 52-residue stretch at 180–231 folds into the LRRCT domain; sequence NPFDCTCGIVWFKTWALASAVSIPEQDNIACTTPHVLKGIPLGRLPPLPCSA. The 112-residue stretch at 232–343 folds into the Ig-like domain; the sequence is PSVQLSYQPS…GSAESSVNVA (112 aa). Cysteines 257 and 327 form a disulfide. Residue asparagine 309 is glycosylated (N-linked (GlcNAc...) asparagine).

Detected in thyroid, heart, retina and spinal cord.

Its subcellular location is the secreted. The protein is Immunoglobulin superfamily containing leucine-rich repeat protein (Islr) of Mus musculus (Mouse).